The following is a 340-amino-acid chain: Holliday junction branch migration complex subunit RuvB (340 aa).

Positions 1-182 (MSDIDPTVRA…FGIPTRLQFY (182 aa)) are large ATPase domain (RuvB-L). ATP-binding positions include Leu21, Arg22, Gly63, Lys66, Thr67, Thr68, 129 to 131 (EDF), Arg172, Tyr182, and Arg219. Thr67 provides a ligand contact to Mg(2+). The tract at residues 183–253 (TEDELFIIVD…LADMALNRLG (71 aa)) is small ATPAse domain (RuvB-S). Residues 256–340 (HLGLDGADRR…PRAQTDLFEG (85 aa)) form a head domain (RuvB-H) region. 3 residues coordinate DNA: Arg292, Arg311, and Arg316.

The protein belongs to the RuvB family. In terms of assembly, homohexamer. Forms an RuvA(8)-RuvB(12)-Holliday junction (HJ) complex. HJ DNA is sandwiched between 2 RuvA tetramers; dsDNA enters through RuvA and exits via RuvB. An RuvB hexamer assembles on each DNA strand where it exits the tetramer. Each RuvB hexamer is contacted by two RuvA subunits (via domain III) on 2 adjacent RuvB subunits; this complex drives branch migration. In the full resolvosome a probable DNA-RuvA(4)-RuvB(12)-RuvC(2) complex forms which resolves the HJ.

Its subcellular location is the cytoplasm. It catalyses the reaction ATP + H2O = ADP + phosphate + H(+). Functionally, the RuvA-RuvB-RuvC complex processes Holliday junction (HJ) DNA during genetic recombination and DNA repair, while the RuvA-RuvB complex plays an important role in the rescue of blocked DNA replication forks via replication fork reversal (RFR). RuvA specifically binds to HJ cruciform DNA, conferring on it an open structure. The RuvB hexamer acts as an ATP-dependent pump, pulling dsDNA into and through the RuvAB complex. RuvB forms 2 homohexamers on either side of HJ DNA bound by 1 or 2 RuvA tetramers; 4 subunits per hexamer contact DNA at a time. Coordinated motions by a converter formed by DNA-disengaged RuvB subunits stimulates ATP hydrolysis and nucleotide exchange. Immobilization of the converter enables RuvB to convert the ATP-contained energy into a lever motion, pulling 2 nucleotides of DNA out of the RuvA tetramer per ATP hydrolyzed, thus driving DNA branch migration. The RuvB motors rotate together with the DNA substrate, which together with the progressing nucleotide cycle form the mechanistic basis for DNA recombination by continuous HJ branch migration. Branch migration allows RuvC to scan DNA until it finds its consensus sequence, where it cleaves and resolves cruciform DNA. The protein is Holliday junction branch migration complex subunit RuvB of Roseobacter denitrificans (strain ATCC 33942 / OCh 114) (Erythrobacter sp. (strain OCh 114)).